We begin with the raw amino-acid sequence, 408 residues long: MKDVLERFLGYIKVDTQSSEESDTVPTTKTQLEFAKKLGEELKAIGLKDVSVDENGYVMATLESNIDKKVPTIGFIAHMDTSPDLSGTNINPRIVEKYDGQDIVLNKEKNIILKINEFPEILEYKGQDIVVTDGNTLLGADDKAGIAEIITAVEYLINHPEIKHGTIKVGFTPDEEVGKGADHFDVKKFGADLAYTLDGGGIGELECETFNAAKAKVIIEGRNVHPGSAKNKMTNAVLVANKFINMLPENEVPERTEGYEGFFHLLSVKSEVETAELNYIIRDFDRKKFEERKEQIKEVGKKINEKYNKEIVCVKVEDQYYNMKEKIDEVKYVVDIAHDAMKAIDIEPILVPIRGGTDGSRLSFMGLPTPNLFAGGHNFHGRFEFVPVLSMEKAAELVVKIAELYANR.

A Zn(2+)-binding site is contributed by His78. Asp80 is an active-site residue. Asp141 lines the Zn(2+) pocket. Residue Glu175 is the Proton acceptor of the active site. 3 residues coordinate Zn(2+): Glu176, Asp198, and His380.

The protein belongs to the peptidase M20B family. Requires Zn(2+) as cofactor.

It localises to the cytoplasm. It carries out the reaction Release of the N-terminal residue from a tripeptide.. In terms of biological role, cleaves the N-terminal amino acid of tripeptides. This is Peptidase T from Clostridium botulinum (strain Loch Maree / Type A3).